The primary structure comprises 651 residues: Acetyl-coenzyme A synthetase (651 aa).

Residues 190-193 (RRGK) and T311 each bind CoA. ATP contacts are provided by residues 387 to 389 (GEP), 411 to 416 (DTWWQT), D508, and R523. Residue S531 participates in CoA binding. An ATP-binding site is contributed by R534. Residues V545, H547, and V550 each contribute to the Mg(2+) site. N6-acetyllysine is present on K617.

This sequence belongs to the ATP-dependent AMP-binding enzyme family. Requires Mg(2+) as cofactor. In terms of processing, acetylated. Deacetylation by the SIR2-homolog deacetylase activates the enzyme.

It carries out the reaction acetate + ATP + CoA = acetyl-CoA + AMP + diphosphate. Its function is as follows. Catalyzes the conversion of acetate into acetyl-CoA (AcCoA), an essential intermediate at the junction of anabolic and catabolic pathways. AcsA undergoes a two-step reaction. In the first half reaction, AcsA combines acetate with ATP to form acetyl-adenylate (AcAMP) intermediate. In the second half reaction, it can then transfer the acetyl group from AcAMP to the sulfhydryl group of CoA, forming the product AcCoA. The chain is Acetyl-coenzyme A synthetase from Mycobacterium bovis (strain ATCC BAA-935 / AF2122/97).